Consider the following 487-residue polypeptide: Sorting nexin-4 (487 aa).

The segment at 1 to 59 (MDHDDFDSVSWRHGPDSDISRPTTSGTDTAESPETRRDPNGKRRMSSASEIPQAGPHAD) is disordered. Residues 20-32 (SRPTTSGTDTAES) show a composition bias toward polar residues. The region spanning 70 to 192 (VLECRVDTPI…IFLESPDWNA (123 aa)) is the PX domain. Arg113, Thr115, Lys139, and Arg158 together coordinate a 1,2-diacyl-sn-glycero-3-phospho-(1D-myo-inositol-3-phosphate). The stretch at 395–430 (EQSRRERMRKLELRIDELTREVESAKTTSEMFDEEV) forms a coiled coil.

This sequence belongs to the sorting nexin family.

Its subcellular location is the cytoplasm. It is found in the cytosol. The protein localises to the preautophagosomal structure membrane. It localises to the endosome membrane. Sorting nexin, involved in the separation or division of vacuoles throughout the entire life cycle of the cells. Involved in retrieval of late-Golgi SNAREs from post-Golgi endosomes to the trans-Golgi network, for cytoplasm to vacuole transport (Cvt), and autophagy of large cargos including mitophagy, pexophagy and glycophagy. This chain is Sorting nexin-4 (snx4), found in Emericella nidulans (strain FGSC A4 / ATCC 38163 / CBS 112.46 / NRRL 194 / M139) (Aspergillus nidulans).